The sequence spans 75 residues: MKTLVLFIIFGLAALFLLSSANELEETERGCGLLMDACDGKSTFCCSGYNCSPTWKWCVLDCPNLFLLPPTKTLC.

An N-terminal signal peptide occupies residues 1–21; sequence MKTLVLFIIFGLAALFLLSSA. Residues 22–29 constitute a propeptide that is removed on maturation; it reads NELEETER. 3 disulfides stabilise this stretch: Cys-31/Cys-46, Cys-38/Cys-51, and Cys-45/Cys-58.

It belongs to the neurotoxin 10 (Hwtx-1) family. 43 (Jztx-49) subfamily. In terms of tissue distribution, expressed by the venom gland.

It localises to the secreted. Probable ion channel inhibitor. The chain is U9-theraphotoxin-Cg1a from Chilobrachys guangxiensis (Chinese earth tiger tarantula).